The following is a 58-amino-acid chain: Large ribosomal subunit protein eL37 (58 aa).

The Zn(2+) site is built by Cys-20, Cys-23, Cys-35, and Cys-38. The C4-type zinc finger occupies 20–38 (CRRCGEKSYHTKKKVCSSC).

The protein belongs to the eukaryotic ribosomal protein eL37 family. It depends on Zn(2+) as a cofactor.

In terms of biological role, binds to the 23S rRNA. The protein is Large ribosomal subunit protein eL37 of Haloquadratum walsbyi (strain DSM 16790 / HBSQ001).